Here is a 1404-residue protein sequence, read N- to C-terminus: MNYFKYFIFVVFLFFTIVKCEQLLGEIEISNKNFAIDASVVDTKINYILDDTIKTPKLIITSIKGDATNINDIITVSEDKSTVTFGDFTELSSSNKLVGFNWISMLIASLLSIGLFATTTTTNKKSSIIILIIGFICLSLMINGIQSISLSDVSVKIEIRVPSNYQFESFKLKLNSGSSNIVGLIANSIEIDSCSMVKDHSITIGQLVVFSSLKVCSSLDIKITNLGLSPSNTIAELKTTRNIDLQFSNGFSGSISIDSPSVTLDPGCTTTISGQTTTGTCNGGSSSKLSISAGNSAIVRNLEITCPIDNSWRVTPASSGPSTNSPSIFTTQPATNFNYGKSNLVFMAQWNNVSLLDGPVENSFNITYVTWSPNSHWLVSKDPSPTLKSGVNYEFSLELLLGQPLGEYTSISNVSIYFFNPKDITNPNGNSRYFQYSNKPPLYMKTFSGANFISNSNFIKTSITFSPTKDIGSAVFALQINRTAALTGPSEISISIKDMKITIPSKSITTPSNILSKDSELLTLPRPSTLLDPQDSSSCTYKQTDLVHWHNPSTWASGFVPLPSSNIILPEGKRVLISPCSISQTEVYKKITIPPTSELVFSDSPMTINVQDIYVQGKLTMGTNTCRYNANINVIFHGNKTTTDTIAQYFGSKGIAVASGGFISVQGKQYHNTWTKLSTTAWTGDYVIYVQDSINWEVGQQVLITTSVYRDESDNQNEVMTIAAIQGKVIQFTKPLRYYHYGGQEYQAEVALLSRRIVFRGDGNGQEQTDSQSFGGHVLVNGEGQFSGIQLIRMGQTNIKARYPLHYHLAGTVKNSYISDCSVTNSYYRCYTIHGTNNVSLVRNVAFDIRGHCYYLEDGVEVDNNIWFNFASYVHPIGKPAGGPSQTGEIFQQSDSLTQPADSAAGCYYITNAYNSLVGNAASGGWSGFAFPNLDKPIGNHRTISIIPSQFPLKEFTGNTAHSSGYYFEEGGSIYVGGNLTFNEATQLLTYNSGRFSRSTYFNGTKKDGNERWMRFNNTKIYLSNRGIQHWGERVEVVGLESHDSIRPSTLFGQAWLSNAIVNGQSGNIVSNQGRNRQGFQFYDTYVQTILSNINFRNFIKDPDSENPESDNRVIISMTHSDVFKPQGISATKQITLTNVASSQVIGHRVVETGSSRYFNFIDWDTSLVPGRTAVGAPTLVGSHQNWWQYDATCSYNNDWLCWVCDKGDKEIASISVLVPGLIESGYTNQEEDSYVGTASLFGNGITNRRSTNITRNAGITGVSNMGWYLWFSTGTPTSINIWVAQVIKNNYLFVAIPYPANTEFSIRCAYRWNNKFNYNFVLANSASEVRNGNGTRYYFDQTHLFIKAVNLALTGNEYFERGGAKVYNVFWEFNIYIEASNKNVQPVNGFYTGIPDTLPSGNL.

The N-terminal stretch at 1-20 is a signal peptide; it reads MNYFKYFIFVVFLFFTIVKC. The next 2 membrane-spanning stretches (helical) occupy residues 97 to 117 and 128 to 148; these read LVGF…GLFA and IIIL…IQSI. Asparagine 352, asparagine 365, asparagine 413, asparagine 481, asparagine 639, asparagine 838, asparagine 979, asparagine 1003, asparagine 1017, asparagine 1253, and asparagine 1334 each carry an N-linked (GlcNAc...) asparagine glycan. Residues 553-679 form the G8 domain; the sequence is STWASGFVPL…YHNTWTKLST (127 aa).

The protein belongs to the comF family.

It is found in the membrane. The polypeptide is G8 domain-containing protein DDB_G0286897 (Dictyostelium discoideum (Social amoeba)).